The sequence spans 320 residues: Tyrosine recombinase XerC (320 aa).

Positions 14–104 (ADVREAVASW…SLRSFARHLE (91 aa)) constitute a Core-binding (CB) domain. In terms of domain architecture, Tyr recombinase spans 125 to 311 (RLPRPLPVAA…DSARLMSAFE (187 aa)). Catalysis depends on residues Arg170, Lys195, His263, Arg266, and His289. Tyr298 (O-(3'-phospho-DNA)-tyrosine intermediate) is an active-site residue.

Belongs to the 'phage' integrase family. XerC subfamily. As to quaternary structure, forms a cyclic heterotetrameric complex composed of two molecules of XerC and two molecules of XerD.

Its subcellular location is the cytoplasm. In terms of biological role, site-specific tyrosine recombinase, which acts by catalyzing the cutting and rejoining of the recombining DNA molecules. The XerC-XerD complex is essential to convert dimers of the bacterial chromosome into monomers to permit their segregation at cell division. It also contributes to the segregational stability of plasmids. This Methylobacterium sp. (strain 4-46) protein is Tyrosine recombinase XerC.